We begin with the raw amino-acid sequence, 384 residues long: MSHATGSRAAGATTACKVIVGMSGGVDSSVTALTLLEQGYAVEGLFMKNWDEDDGTEYCTAKEDLADAQAVCDTLGITLHTANFAAEYWDNVFEHFLAEYKAGRTPNPDILCNREIKFKVFLEYAEMLGAEKIATGHYVRQGWRDGHCRLLKGLDANKDQSYFLHAVPEVAIARTLFPVGEMEKSEVRAIAERHGLTTARKKDSTGICFIGERRFSDFLKQYLPAQPGVIETPEGEVIGEHMGLMYYTLGQRQGLGIGGLPNHPDAPWYVAAKDLERNVLIAVQGKHHPLLYTDSLSTEPVEWVAGQPPAPEARLQAKTRYRQQDVACHVRVLEDGGVEARFDEPQRAVTPGQSLVLYDGDICLGGGVIRSTWNHSEPRGDSAA.

ATP-binding positions include 21-28 and M47; that span reads GMSGGVDS. The segment at 107 to 109 is interaction with target base in tRNA; sequence NPD. The active-site Nucleophile is the C112. C112 and C208 are disulfide-bonded. Position 136 (G136) interacts with ATP. Positions 158 to 160 are interaction with tRNA; the sequence is KDQ. The active-site Cysteine persulfide intermediate is C208. The tract at residues 320–321 is interaction with tRNA; sequence RY.

Belongs to the MnmA/TRMU family.

The protein resides in the cytoplasm. The enzyme catalyses S-sulfanyl-L-cysteinyl-[protein] + uridine(34) in tRNA + AH2 + ATP = 2-thiouridine(34) in tRNA + L-cysteinyl-[protein] + A + AMP + diphosphate + H(+). Its function is as follows. Catalyzes the 2-thiolation of uridine at the wobble position (U34) of tRNA, leading to the formation of s(2)U34. In Chromohalobacter salexigens (strain ATCC BAA-138 / DSM 3043 / CIP 106854 / NCIMB 13768 / 1H11), this protein is tRNA-specific 2-thiouridylase MnmA.